A 514-amino-acid chain; its full sequence is Bifunctional purine biosynthesis protein PurH (514 aa).

Positions methionine 1–cysteine 146 constitute an MGS-like domain.

Belongs to the PurH family.

The catalysed reaction is (6R)-10-formyltetrahydrofolate + 5-amino-1-(5-phospho-beta-D-ribosyl)imidazole-4-carboxamide = 5-formamido-1-(5-phospho-D-ribosyl)imidazole-4-carboxamide + (6S)-5,6,7,8-tetrahydrofolate. The enzyme catalyses IMP + H2O = 5-formamido-1-(5-phospho-D-ribosyl)imidazole-4-carboxamide. It participates in purine metabolism; IMP biosynthesis via de novo pathway; 5-formamido-1-(5-phospho-D-ribosyl)imidazole-4-carboxamide from 5-amino-1-(5-phospho-D-ribosyl)imidazole-4-carboxamide (10-formyl THF route): step 1/1. It functions in the pathway purine metabolism; IMP biosynthesis via de novo pathway; IMP from 5-formamido-1-(5-phospho-D-ribosyl)imidazole-4-carboxamide: step 1/1. This chain is Bifunctional purine biosynthesis protein PurH, found in Nostoc punctiforme (strain ATCC 29133 / PCC 73102).